The sequence spans 550 residues: Membrane-bound alkaline phosphatase (550 aa).

A signal peptide spans 1–39; it reads MSTWWLVVVAAAAAAGLVRAEDRYHPERLAAGEASAATR. Mg(2+) is bound at residue aspartate 83. Zn(2+) is bound at residue aspartate 83. The Phosphoserine intermediate role is filled by serine 133. Mg(2+) contacts are provided by histidine 196, serine 198, and glutamate 356. Zn(2+) contacts are provided by aspartate 361, histidine 365, aspartate 402, histidine 403, and histidine 479. A lipid anchor (GPI-anchor amidated serine) is attached at serine 524. The propeptide at 525 to 550 is removed in mature form; that stretch reads AATVPTAALLSLLLAAFITLRHQCFL.

Belongs to the alkaline phosphatase family. The cofactor is Mg(2+). It depends on Zn(2+) as a cofactor. As to expression, midgut.

It is found in the cell membrane. It catalyses the reaction a phosphate monoester + H2O = an alcohol + phosphate. This Bombyx mori (Silk moth) protein is Membrane-bound alkaline phosphatase (Alp-m).